An 873-amino-acid polypeptide reads, in one-letter code: Protein translocase subunit SecA (873 aa).

ATP is bound by residues glutamine 88, 106–110, and aspartate 501; that span reads GEGKT. Positions 856, 858, 867, and 868 each coordinate Zn(2+).

This sequence belongs to the SecA family. As to quaternary structure, monomer and homodimer. Part of the essential Sec protein translocation apparatus which comprises SecA, SecYEG and auxiliary proteins SecDF-YajC and YidC. Zn(2+) serves as cofactor.

It localises to the cell inner membrane. The protein resides in the cytoplasm. The catalysed reaction is ATP + H2O + cellular proteinSide 1 = ADP + phosphate + cellular proteinSide 2.. Its function is as follows. Part of the Sec protein translocase complex. Interacts with the SecYEG preprotein conducting channel. Has a central role in coupling the hydrolysis of ATP to the transfer of proteins into and across the cell membrane, serving both as a receptor for the preprotein-SecB complex and as an ATP-driven molecular motor driving the stepwise translocation of polypeptide chains across the membrane. In Anaplasma phagocytophilum (strain HZ), this protein is Protein translocase subunit SecA.